A 359-amino-acid chain; its full sequence is Probable dual-specificity RNA methyltransferase RlmN (359 aa).

The Proton acceptor role is filled by Glu100. Residues 106 to 340 enclose the Radical SAM core domain; the sequence is TDKRLTVCVS…VSVRASRGRD (235 aa). The cysteines at positions 113 and 345 are disulfide-linked. [4Fe-4S] cluster contacts are provided by Cys120, Cys124, and Cys127. Residues 167–168, Ser197, 226–228, and Asn302 contribute to the S-adenosyl-L-methionine site; these read GE and SLH. Cys345 functions as the S-methylcysteine intermediate in the catalytic mechanism.

It belongs to the radical SAM superfamily. RlmN family. The cofactor is [4Fe-4S] cluster.

The protein localises to the cytoplasm. It catalyses the reaction adenosine(2503) in 23S rRNA + 2 reduced [2Fe-2S]-[ferredoxin] + 2 S-adenosyl-L-methionine = 2-methyladenosine(2503) in 23S rRNA + 5'-deoxyadenosine + L-methionine + 2 oxidized [2Fe-2S]-[ferredoxin] + S-adenosyl-L-homocysteine. The enzyme catalyses adenosine(37) in tRNA + 2 reduced [2Fe-2S]-[ferredoxin] + 2 S-adenosyl-L-methionine = 2-methyladenosine(37) in tRNA + 5'-deoxyadenosine + L-methionine + 2 oxidized [2Fe-2S]-[ferredoxin] + S-adenosyl-L-homocysteine. Functionally, specifically methylates position 2 of adenine 2503 in 23S rRNA and position 2 of adenine 37 in tRNAs. The sequence is that of Probable dual-specificity RNA methyltransferase RlmN from Prochlorococcus marinus (strain NATL2A).